We begin with the raw amino-acid sequence, 128 residues long: Large ribosomal subunit protein bL12 (128 aa).

Belongs to the bacterial ribosomal protein bL12 family. As to quaternary structure, homodimer. Part of the ribosomal stalk of the 50S ribosomal subunit. Forms a multimeric L10(L12)X complex, where L10 forms an elongated spine to which 2 to 4 L12 dimers bind in a sequential fashion. Binds GTP-bound translation factors.

Its function is as follows. Forms part of the ribosomal stalk which helps the ribosome interact with GTP-bound translation factors. Is thus essential for accurate translation. This is Large ribosomal subunit protein bL12 from Kineococcus radiotolerans (strain ATCC BAA-149 / DSM 14245 / SRS30216).